A 256-amino-acid polypeptide reads, in one-letter code: Thiazole synthase (256 aa).

Residue lysine 95 is the Schiff-base intermediate with DXP of the active site. Residues glycine 156, 182-183 (AG), and 204-205 (NT) each bind 1-deoxy-D-xylulose 5-phosphate.

The protein belongs to the ThiG family. Homotetramer. Forms heterodimers with either ThiH or ThiS.

It localises to the cytoplasm. It carries out the reaction [ThiS sulfur-carrier protein]-C-terminal-Gly-aminoethanethioate + 2-iminoacetate + 1-deoxy-D-xylulose 5-phosphate = [ThiS sulfur-carrier protein]-C-terminal Gly-Gly + 2-[(2R,5Z)-2-carboxy-4-methylthiazol-5(2H)-ylidene]ethyl phosphate + 2 H2O + H(+). The protein operates within cofactor biosynthesis; thiamine diphosphate biosynthesis. Its function is as follows. Catalyzes the rearrangement of 1-deoxy-D-xylulose 5-phosphate (DXP) to produce the thiazole phosphate moiety of thiamine. Sulfur is provided by the thiocarboxylate moiety of the carrier protein ThiS. In vitro, sulfur can be provided by H(2)S. This chain is Thiazole synthase, found in Escherichia coli O17:K52:H18 (strain UMN026 / ExPEC).